A 288-amino-acid chain; its full sequence is MKVDINAVKELRNLTGAGVGDCKEALNSCGGDIEKAKNYLREQGIAKAYKKSTKDVSDGLVAVHVNGNQGAILEVNSETDFVARNEKFQKLVLNLVSLANQYAVEDIEDFLKHEYVSGTSIHDEIMTNIAVIGENIHLNKIGYLSVNAGVVGGYIHSPVVNNLGKIGAIVALESTADNDKLNVLARQIAMHIVAARPEALSVDLLDKDILDKEREIIKKQVDQLNKPVSVAERIIDGRIAKFYQDVVLLEQIFVMDNQLTISELIKKKESELGASINLVGYKLFVISK.

An involved in Mg(2+) ion dislocation from EF-Tu region spans residues 79–82 (TDFV).

Belongs to the EF-Ts family.

The protein localises to the cytoplasm. In terms of biological role, associates with the EF-Tu.GDP complex and induces the exchange of GDP to GTP. It remains bound to the aminoacyl-tRNA.EF-Tu.GTP complex up to the GTP hydrolysis stage on the ribosome. This is Elongation factor Ts from Ehrlichia chaffeensis (strain ATCC CRL-10679 / Arkansas).